Reading from the N-terminus, the 189-residue chain is ATP synthase subunit b (189 aa).

A helical transmembrane segment spans residues 23-43 (IEIVLSLVVFGLLLFAVWKFV).

It belongs to the ATPase B chain family. As to quaternary structure, F-type ATPases have 2 components, F(1) - the catalytic core - and F(0) - the membrane proton channel. F(1) has five subunits: alpha(3), beta(3), gamma(1), delta(1), epsilon(1). F(0) has three main subunits: a(1), b(2) and c(10-14). The alpha and beta chains form an alternating ring which encloses part of the gamma chain. F(1) is attached to F(0) by a central stalk formed by the gamma and epsilon chains, while a peripheral stalk is formed by the delta and b chains.

The protein resides in the cell membrane. In terms of biological role, f(1)F(0) ATP synthase produces ATP from ADP in the presence of a proton or sodium gradient. F-type ATPases consist of two structural domains, F(1) containing the extramembraneous catalytic core and F(0) containing the membrane proton channel, linked together by a central stalk and a peripheral stalk. During catalysis, ATP synthesis in the catalytic domain of F(1) is coupled via a rotary mechanism of the central stalk subunits to proton translocation. Functionally, component of the F(0) channel, it forms part of the peripheral stalk, linking F(1) to F(0). In Nocardioides sp. (strain ATCC BAA-499 / JS614), this protein is ATP synthase subunit b.